A 234-amino-acid polypeptide reads, in one-letter code: Sugar fermentation stimulation protein A (234 aa).

A DNA-binding region (H-T-H motif) is located at residues 201 to 220; the sequence is LLTEAQQRGVEILAYKAEIS.

This sequence belongs to the SfsA family.

In terms of biological role, binds to DNA non-specifically. Could be a regulatory factor involved in maltose metabolism. This is Sugar fermentation stimulation protein A from Escherichia fergusonii (strain ATCC 35469 / DSM 13698 / CCUG 18766 / IAM 14443 / JCM 21226 / LMG 7866 / NBRC 102419 / NCTC 12128 / CDC 0568-73).